We begin with the raw amino-acid sequence, 198 residues long: Na(+)-translocating NADH-quinone reductase subunit E (198 aa).

6 consecutive transmembrane segments (helical) span residues serine 11 to valine 31, methionine 39 to isoleucine 59, phenylalanine 77 to alanine 97, glycine 110 to valine 130, valine 140 to isoleucine 160, and leucine 176 to isoleucine 196.

It belongs to the NqrDE/RnfAE family. Composed of six subunits; NqrA, NqrB, NqrC, NqrD, NqrE and NqrF.

It localises to the cell inner membrane. It carries out the reaction a ubiquinone + n Na(+)(in) + NADH + H(+) = a ubiquinol + n Na(+)(out) + NAD(+). Functionally, NQR complex catalyzes the reduction of ubiquinone-1 to ubiquinol by two successive reactions, coupled with the transport of Na(+) ions from the cytoplasm to the periplasm. NqrA to NqrE are probably involved in the second step, the conversion of ubisemiquinone to ubiquinol. The sequence is that of Na(+)-translocating NADH-quinone reductase subunit E from Aeromonas hydrophila subsp. hydrophila (strain ATCC 7966 / DSM 30187 / BCRC 13018 / CCUG 14551 / JCM 1027 / KCTC 2358 / NCIMB 9240 / NCTC 8049).